Reading from the N-terminus, the 126-residue chain is Holo-[acyl-carrier-protein] synthase (126 aa).

Residues aspartate 9 and glutamate 58 each contribute to the Mg(2+) site.

It belongs to the P-Pant transferase superfamily. AcpS family. The cofactor is Mg(2+).

It is found in the cytoplasm. The catalysed reaction is apo-[ACP] + CoA = holo-[ACP] + adenosine 3',5'-bisphosphate + H(+). Functionally, transfers the 4'-phosphopantetheine moiety from coenzyme A to a Ser of acyl-carrier-protein. The chain is Holo-[acyl-carrier-protein] synthase from Serratia proteamaculans (strain 568).